Here is a 142-residue protein sequence, read N- to C-terminus: uncharacterized protein (142 aa).

2 N-linked (GlcNAc...) asparagine; by host glycosylation sites follow: Asn29 and Asn67. The helical transmembrane segment at 88 to 108 (VFYLGYPVIFIIGVTYFSIIA) threads the bilayer.

Its subcellular location is the membrane. This is an uncharacterized protein from Acanthamoeba polyphaga mimivirus (APMV).